A 360-amino-acid polypeptide reads, in one-letter code: Phospho-N-acetylmuramoyl-pentapeptide-transferase (360 aa).

The Periplasmic portion of the chain corresponds to 1 to 25 (MLVWLAEHLVKYYSGFNVFSYLTFR). The chain crosses the membrane as a helical span at residues 26–46 (AIVSLLTALFISLWMGPRMIA). Topologically, residues 47–71 (RLQKLSFGQVVRNDGPESHFSKRGT) are cytoplasmic. The helical transmembrane segment at 72–92 (PTMGGIMILTSIVISVLLWAY) threads the bilayer. Position 93 (proline 93) is a topological domain, periplasmic. Residues 94 to 114 (SNPYVWCVLVVLIGYGIIGFV) traverse the membrane as a helical segment. Residues 115–131 (DDYRKVVRKDTKGLIAR) are Cytoplasmic-facing. Residues 132-152 (WKYFWMSVIALGVAFALYLVG) traverse the membrane as a helical segment. Over 153-167 (KDTPATQLVVPFFKD) the chain is Periplasmic. The helical transmembrane segment at 168–188 (VMPQLGLFYILLSYFVIVGTG) threads the bilayer. Residues 189–198 (NAVNLTDGLD) are Cytoplasmic-facing. The chain crosses the membrane as a helical span at residues 199 to 219 (GLAIMPTVFVAAGFALVAWAT). Over 220–235 (GNMNFANYLHIPYLRH) the chain is Periplasmic. A helical transmembrane segment spans residues 236–256 (AGELVIVCTAIVGAGLGFLWF). Topologically, residues 257–262 (NTYPAQ) are cytoplasmic. Residues 263 to 283 (VFMGDVGSLALGGALGIIAVL) form a helical membrane-spanning segment. The Periplasmic segment spans residues 284–287 (LRQE). Residues 288–308 (FLLVIMGGVFVVETLSVILQV) form a helical membrane-spanning segment. At 309–337 (GSFKLRGQRIFRMAPIHHHYELKGWPEPR) the chain is on the cytoplasmic side. A helical transmembrane segment spans residues 338–358 (VIVRFWIISLMLVLIGLATLK). Topologically, residues 359 to 360 (VR) are periplasmic.

This sequence belongs to the glycosyltransferase 4 family. MraY subfamily. The cofactor is Mg(2+).

The protein localises to the cell inner membrane. The catalysed reaction is UDP-N-acetyl-alpha-D-muramoyl-L-alanyl-gamma-D-glutamyl-meso-2,6-diaminopimeloyl-D-alanyl-D-alanine + di-trans,octa-cis-undecaprenyl phosphate = di-trans,octa-cis-undecaprenyl diphospho-N-acetyl-alpha-D-muramoyl-L-alanyl-D-glutamyl-meso-2,6-diaminopimeloyl-D-alanyl-D-alanine + UMP. The protein operates within cell wall biogenesis; peptidoglycan biosynthesis. In terms of biological role, catalyzes the initial step of the lipid cycle reactions in the biosynthesis of the cell wall peptidoglycan: transfers peptidoglycan precursor phospho-MurNAc-pentapeptide from UDP-MurNAc-pentapeptide onto the lipid carrier undecaprenyl phosphate, yielding undecaprenyl-pyrophosphoryl-MurNAc-pentapeptide, known as lipid I. This chain is Phospho-N-acetylmuramoyl-pentapeptide-transferase, found in Salmonella gallinarum (strain 287/91 / NCTC 13346).